Here is a 266-residue protein sequence, read N- to C-terminus: Proliferating cell nuclear antigen (266 aa).

The DNA-binding element occupies 61–80; it reads RCDRNLSMGMNLNNMAKMLK.

The protein belongs to the PCNA family.

Its subcellular location is the nucleus. Functionally, this protein is an auxiliary protein of DNA polymerase delta and is involved in the control of eukaryotic DNA replication by increasing the polymerase's processibility during elongation of the leading strand. This Pisum sativum (Garden pea) protein is Proliferating cell nuclear antigen (PCNA).